The chain runs to 29 residues: Ceratotoxin-B (29 aa).

As to quaternary structure, homomer of four to six subunits.

The protein resides in the secreted. Female-specific peptides with potent activity against Gram-positive and Gram-negative bacteria. They have as well hemolytic activity. In Ceratitis capitata (Mediterranean fruit fly), this protein is Ceratotoxin-B (CTXB).